The following is a 145-amino-acid chain: Deoxyuridine 5'-triphosphate nucleotidohydrolase (145 aa).

Residues 62–64 (RSG), Asn-75, and 79–81 (TVD) contribute to the substrate site.

It belongs to the dUTPase family. Requires Mg(2+) as cofactor.

The catalysed reaction is dUTP + H2O = dUMP + diphosphate + H(+). Its pathway is pyrimidine metabolism; dUMP biosynthesis; dUMP from dCTP (dUTP route): step 2/2. Its function is as follows. This enzyme is involved in nucleotide metabolism: it produces dUMP, the immediate precursor of thymidine nucleotides and it decreases the intracellular concentration of dUTP so that uracil cannot be incorporated into DNA. In Gloeothece citriformis (strain PCC 7424) (Cyanothece sp. (strain PCC 7424)), this protein is Deoxyuridine 5'-triphosphate nucleotidohydrolase.